A 98-amino-acid polypeptide reads, in one-letter code: Large ribosomal subunit protein uL23 (98 aa).

This sequence belongs to the universal ribosomal protein uL23 family. As to quaternary structure, part of the 50S ribosomal subunit. Contacts protein L29, and trigger factor when it is bound to the ribosome.

Functionally, one of the early assembly proteins it binds 23S rRNA. One of the proteins that surrounds the polypeptide exit tunnel on the outside of the ribosome. Forms the main docking site for trigger factor binding to the ribosome. The protein is Large ribosomal subunit protein uL23 of Rickettsia canadensis (strain McKiel).